Here is a 51-residue protein sequence, read N- to C-terminus: uncharacterized protein (51 aa).

To E.coli YdaF.

This is an uncharacterized protein from Escherichia coli O157:H7.